The sequence spans 164 residues: SsrA-binding protein (164 aa).

A disordered region spans residues 141–164 (KLHDKRQDEKQKSIKREINSALKR). Positions 145 to 158 (KRQDEKQKSIKREI) are enriched in basic and acidic residues.

This sequence belongs to the SmpB family.

The protein resides in the cytoplasm. Required for rescue of stalled ribosomes mediated by trans-translation. Binds to transfer-messenger RNA (tmRNA), required for stable association of tmRNA with ribosomes. tmRNA and SmpB together mimic tRNA shape, replacing the anticodon stem-loop with SmpB. tmRNA is encoded by the ssrA gene; the 2 termini fold to resemble tRNA(Ala) and it encodes a 'tag peptide', a short internal open reading frame. During trans-translation Ala-aminoacylated tmRNA acts like a tRNA, entering the A-site of stalled ribosomes, displacing the stalled mRNA. The ribosome then switches to translate the ORF on the tmRNA; the nascent peptide is terminated with the 'tag peptide' encoded by the tmRNA and targeted for degradation. The ribosome is freed to recommence translation, which seems to be the essential function of trans-translation. The protein is SsrA-binding protein of Prochlorococcus marinus (strain MIT 9215).